Reading from the N-terminus, the 294-residue chain is Tyrosine recombinase XerC (294 aa).

In terms of domain architecture, Core-binding (CB) spans 1 to 85; it reads MSRLVEDFFA…ACRGFYTWLV (85 aa). The 178-residue stretch at 106–283 folds into the Tyr recombinase domain; it reads KLPRILDADE…DFQYLSKVYD (178 aa). Active-site residues include arginine 145, lysine 169, histidine 235, arginine 238, and histidine 261. The active-site O-(3'-phospho-DNA)-tyrosine intermediate is the tyrosine 270.

It belongs to the 'phage' integrase family. XerC subfamily. As to quaternary structure, forms a cyclic heterotetrameric complex composed of two molecules of XerC and two molecules of XerD.

It is found in the cytoplasm. Its function is as follows. Site-specific tyrosine recombinase, which acts by catalyzing the cutting and rejoining of the recombining DNA molecules. The XerC-XerD complex is essential to convert dimers of the bacterial chromosome into monomers to permit their segregation at cell division. It also contributes to the segregational stability of plasmids. The polypeptide is Tyrosine recombinase XerC (Xylella fastidiosa (strain M23)).